The primary structure comprises 23 residues: Basic phospholipase A2 homolog CTs-K49c (23 aa).

Contains 7 disulfide bonds. In terms of tissue distribution, expressed by the venom gland.

It localises to the secreted. Its function is as follows. Snake venom phospholipase A2 homolog that lacks catalytic activity. Shows myotoxic activities. Induces local edema a few hours after injection (5-10 ug) in the hind paw. The polypeptide is Basic phospholipase A2 homolog CTs-K49c (Trimeresurus stejnegeri (Chinese green tree viper)).